Here is a 661-residue protein sequence, read N- to C-terminus: Peroxisomal acyl-coenzyme A oxidase 1 (661 aa).

At Ser26 the chain carries Phosphoserine. Lys65 is subject to N6-acetyllysine. Lys89 and Lys90 each carry N6-succinyllysine. Residue Thr139 participates in FAD binding. An N6-succinyllysine modification is found at Lys159. Gly178 is an FAD binding site. An N6-acetyllysine modification is found at Lys216. Lys241 is subject to N6-succinyllysine. An N6-acetyllysine mark is found at Lys255, Lys267, and Lys272. Lys349 carries the post-translational modification N6-succinyllysine. The Proton acceptor role is filled by Glu421. N6-acetyllysine; alternate occurs at positions 437 and 446. Lys437 and Lys446 each carry N6-succinyllysine; alternate. N6-acetyllysine is present on Lys500. Lys512 is subject to N6-acetyllysine; alternate. Position 512 is an N6-succinyllysine; alternate (Lys512). Position 542 is an N6-succinyllysine (Lys542). The residue at position 637 (Lys637) is an N6-acetyllysine; alternate. Lys637 carries the N6-succinyllysine; alternate modification. Residue Lys643 is modified to N6-succinyllysine. Position 649 is a phosphoserine (Ser649). The residue at position 652 (Lys652) is an N6-acetyllysine. Position 655 is an N6-succinyllysine (Lys655). Residues 659-661 carry the Microbody targeting signal motif; the sequence is SKL.

This sequence belongs to the acyl-CoA oxidase family. As to quaternary structure, homodimer. Interacts with LONP2. The cofactor is FAD. As to expression, highest levels of isoform 1 are found in liver and kidney while highest levels of isoform 2 are found in white adipose tissue. Isoform 1 is expressed at higher levels than isoform 2 in liver and kidney while isoform 2 is expressed at higher levels in brain, heart, lung, muscle, white adipose tissue and testis.

Its subcellular location is the peroxisome. The catalysed reaction is a 2,3-saturated acyl-CoA + O2 = a (2E)-enoyl-CoA + H2O2. It catalyses the reaction hexadecanoyl-CoA + O2 = (2E)-hexadecenoyl-CoA + H2O2. The enzyme catalyses dodecanoyl-CoA + O2 = (2E)-dodecenoyl-CoA + H2O2. It carries out the reaction octanoyl-CoA + O2 = (2E)-octenoyl-CoA + H2O2. The catalysed reaction is decanoyl-CoA + O2 = (2E)-decenoyl-CoA + H2O2. It catalyses the reaction tetradecanoyl-CoA + O2 = (2E)-tetradecenoyl-CoA + H2O2. The enzyme catalyses hexadecanedioyl-CoA + O2 = (2E)-hexadecenedioyl-CoA + H2O2. It carries out the reaction tetracosanoyl-CoA + O2 = (2E)-tetracosenoyl-CoA + H2O2. The catalysed reaction is glutaryl-CoA + O2 = (2E)-glutaconyl-CoA + H2O2. It catalyses the reaction hexanoyl-CoA + O2 = (2E)-hexenoyl-CoA + H2O2. The enzyme catalyses octadecanoyl-CoA + O2 = (2E)-octadecenoyl-CoA + H2O2. It carries out the reaction (5Z,8Z,11Z,14Z,17Z)-eicosapentaenoyl-CoA + O2 = (2E,5Z,8Z,11Z,14Z,17Z)-icosahexaenoyl-CoA + H2O2. The catalysed reaction is (6Z,9Z,12Z,15Z,18Z,21Z)-tetracosahexaenoyl-CoA + O2 = (2E,6Z,9Z,12Z,15Z,18Z,21Z)-tetracosaheptaenoyl-CoA + H2O2. It functions in the pathway lipid metabolism; peroxisomal fatty acid beta-oxidation. In terms of biological role, involved in the initial and rate-limiting step of peroxisomal beta-oxidation of straight-chain saturated and unsaturated very-long-chain fatty acids. Catalyzes the desaturation of fatty acyl-CoAs such as palmitoyl-CoA (hexadecanoyl-CoA) to 2-trans-enoyl-CoAs ((2E)-enoyl-CoAs) such as (2E)-hexadecenoyl-CoA, and donates electrons directly to molecular oxygen (O(2)), thereby producing hydrogen peroxide (H(2)O(2)). Its function is as follows. Shows highest activity against medium-chain fatty acyl-CoAs. Shows optimum activity with a chain length of 10 carbons (decanoyl-CoA) in vitro. Is active against a much broader range of substrates and shows activity towards long-chain acyl-CoAs. The sequence is that of Peroxisomal acyl-coenzyme A oxidase 1 from Mus musculus (Mouse).